Consider the following 528-residue polypeptide: Linear primary-alkylsulfatase (528 aa).

Residues His-42, His-44, Asp-46, His-47, Glu-151, and Glu-170 each contribute to the Zn(2+) site. Sulfate-binding positions include 179 to 184 and Arg-189; that span reads NVHTLR. A Zn(2+)-binding site is contributed by His-213. Sulfate is bound at residue Tyr-275.

This sequence belongs to the metallo-beta-lactamase superfamily. Type III sulfatase family. Zn(2+) serves as cofactor.

The enzyme catalyses a primary linear alkyl sulfate ester + H2O = a primary alcohol + sulfate + H(+). Alkylsulfatase that cleaves the widely used detergent sodium dodecyl sulfate (SDS), which allows the bacterium to use SDS as a sole carbon or sulfur source. The chain is Linear primary-alkylsulfatase from Pseudomonas sp. (strain ATCC 19151).